The primary structure comprises 197 residues: GTP cyclohydrolase-2 (197 aa).

GTP is bound at residue 50-54; it reads RIHSE. Residues cysteine 55, cysteine 66, and cysteine 68 each contribute to the Zn(2+) site. GTP-binding positions include glutamine 71, 93–95, and threonine 115; that span reads EGR. Aspartate 127 (proton acceptor) is an active-site residue. Arginine 129 (nucleophile) is an active-site residue. Residues threonine 150 and lysine 155 each coordinate GTP.

Belongs to the GTP cyclohydrolase II family. Requires Zn(2+) as cofactor.

It catalyses the reaction GTP + 4 H2O = 2,5-diamino-6-hydroxy-4-(5-phosphoribosylamino)-pyrimidine + formate + 2 phosphate + 3 H(+). The protein operates within cofactor biosynthesis; riboflavin biosynthesis; 5-amino-6-(D-ribitylamino)uracil from GTP: step 1/4. Functionally, catalyzes the conversion of GTP to 2,5-diamino-6-ribosylamino-4(3H)-pyrimidinone 5'-phosphate (DARP), formate and pyrophosphate. The sequence is that of GTP cyclohydrolase-2 from Neisseria meningitidis serogroup A / serotype 4A (strain DSM 15465 / Z2491).